Reading from the N-terminus, the 433-residue chain is ATP-dependent protease ATPase subunit HslU (433 aa).

ATP contacts are provided by residues isoleucine 18, 60–65 (GVGKTE), aspartate 246, glutamate 311, and arginine 383.

Belongs to the ClpX chaperone family. HslU subfamily. A double ring-shaped homohexamer of HslV is capped on each side by a ring-shaped HslU homohexamer. The assembly of the HslU/HslV complex is dependent on binding of ATP.

It is found in the cytoplasm. In terms of biological role, ATPase subunit of a proteasome-like degradation complex; this subunit has chaperone activity. The binding of ATP and its subsequent hydrolysis by HslU are essential for unfolding of protein substrates subsequently hydrolyzed by HslV. HslU recognizes the N-terminal part of its protein substrates and unfolds these before they are guided to HslV for hydrolysis. The polypeptide is ATP-dependent protease ATPase subunit HslU (Cereibacter sphaeroides (strain KD131 / KCTC 12085) (Rhodobacter sphaeroides)).